Consider the following 234-residue polypeptide: UPF0441 protein plu3956 (234 aa).

2 disordered regions span residues 105 to 129 (QAGLGTTTSSTSTNGEAQAQQQQSG) and 149 to 234 (SAPS…SVGG). Low complexity predominate over residues 110 to 127 (TTTSSTSTNGEAQAQQQQ). The segment covering 150-175 (APSQPLFSSKSATSPANGQFVDSTGK) has biased composition (polar residues). 2 stretches are compositionally biased toward low complexity: residues 188–205 (TVPKTAMAPKPATTTTIT) and 216–234 (QSTMQRSASSGSTSRSVGG).

This sequence belongs to the UPF0441 family.

The polypeptide is UPF0441 protein plu3956 (Photorhabdus laumondii subsp. laumondii (strain DSM 15139 / CIP 105565 / TT01) (Photorhabdus luminescens subsp. laumondii)).